The sequence spans 433 residues: Type I acyl-CoA thioesterase mpaH' (433 aa).

The interval 58–246 (HGVGLPKELY…IKALFGTTAD (189 aa)) is abhydrolase domain. Val-60 provides a ligand contact to substrate. Ser-139 (nucleophile) is an active-site residue. Phe-140 is a binding site for substrate. Active-site residues include Asp-163 and His-365.

The protein belongs to the AB hydrolase superfamily. MpaH hydrolase family. As to quaternary structure, homodimer.

It localises to the peroxisome matrix. The enzyme catalyses mycophenolyl-CoA + H2O = mycophenolate + CoA + H(+). It functions in the pathway secondary metabolite biosynthesis; terpenoid biosynthesis. In terms of biological role, type I acyl-CoA thioesterase; part of the gene cluster that mediates the biosynthesis of mycophenolic acid (MPA), the first isolated antibiotic natural product in the world obtained from a culture of Penicillium brevicompactum in 1893. MpaH' acts as a peroxisomal acyl-CoA hydrolase that converts MPA-CoA into the final product MPA. The first step of the pathway is the synthesis of 5-methylorsellinic acid (5MOA) by the cytosolic polyketide synthase mpaC. 5MOA is then converted to the phthalide compound 5,7-dihydroxy-4,6-dimethylphthalide (DHMP) by the endoplasmic reticulum-bound cytochrome P450 monooxygenase mpaDE. MpaDE first catalyzes hydroxylation of 5-MOA to 4,6-dihydroxy-2-(hydroxymethyl)-3-methylbenzoic acid (DHMB). MpaDE then acts as a lactone synthase that catalyzes the ring closure to convert DHMB into DHMP. The next step is the prenylation of DHMP by the Golgi apparatus-associated prenyltransferase mpaA to yield farnesyl-DHMP (FDHMP). The ER-bound oxygenase mpaB then mediates the oxidative cleavage the C19-C20 double bond in FDHMP to yield FDHMP-3C via a mycophenolic aldehyde intermediate. The O-methyltransferase mpaG catalyzes the methylation of FDHMP-3C to yield MFDHMP-3C. After the cytosolic methylation of FDHMP-3C, MFDHMP-3C enters into peroxisomes probably via free diffusion due to its low molecular weight. Upon a peroxisomal CoA ligation reaction, catalyzed by a beta-oxidation component enzyme acyl-CoA ligase ACL891, MFDHMP-3C-CoA would then be restricted to peroxisomes for the following beta-oxidation pathway steps. The peroxisomal beta-oxidation machinery than converts MFDHMP-3C-CoA into MPA_CoA, via a beta-oxidation chain-shortening process. Finally mpaH acts as a peroxisomal acyl-CoA hydrolase with high substrate specificity toward MPA-CoA to release the final product MPA. The protein is Type I acyl-CoA thioesterase mpaH' of Penicillium brevicompactum.